The primary structure comprises 55 residues: Accessory gland-specific peptide 70A (55 aa).

The N-terminal stretch at 1–19 (MKTLALFLVLVCVLGLVQS) is a signal peptide. The segment at 20-33 (WEWPWNRKPTKFPI) is essential for binding to sperm. A hydroxyproline mark is found at proline 28 and proline 32. The residue at position 33 (isoleucine 33) is an Isoleucine derivative. Residues proline 34, proline 36, and proline 38 each carry the hydroxyproline modification. A sufficient to induce PMR region spans residues 36–55 (PNPRDKWCRLNLGPAWGGRC). Cysteines 43 and 55 form a disulfide.

Belongs to the Drosophila sex peptide family. Post-translationally, sperm-bound protein is cleaved to release an active C-terminal peptide. Gradual release from stored sperm may function to prolong PMR and enhance male reproductive success. Main cells of the accessory glands of males (paragonial gland).

Its subcellular location is the secreted. Functionally, male seminal protein which triggers short- and long-term post-mating behavioral responses (PMR) in female Drosophila. Binds initially to sperm where it is later cleaved to release an active peptide within the female reproductive tract. Signals via the sex peptide receptor (SPR) in female flies; may also act via other receptors. Moderates the activity of distinct neuronal circuitries in the female genital tract to promote specific PMRs including: enhanced ovulation, increased egg laying rate, increased feeding/foraging rate, induced antimicrobial peptide synthesis, reduced mating receptivity, reduced day-time sleep and reduced lifespan in multiple mated females. The chain is Accessory gland-specific peptide 70A (SP) from Drosophila melanogaster (Fruit fly).